The following is a 560-amino-acid chain: MRSDKIKLGFDKAPHRSLLKATGAIQSDEDFQKPFIGIANSYIDIIPGHVHLHDFAKRIKEAVRKAGGIPFEFNTIGVDDGIAMGHIGMRYSLASRELIADAVETVVGAHWLDAMICIPNCDKIVPGMMMAAVRLDIPTIFISGGPMKVGVMADGEKVDLISVFEGVGEYSSGKIDDARLKELENNGCPTCGSCSGMFTANSMNCLAEALGLALPGNGTILAVDPKREALAEAAAKQIMTLVEKDIKPSDLLSRESFLNAFALDLAMGGSTNTILHTLAIANEAGINFDLAELNTLAAKTPYICKVSPATKNVHIEDVDRAGGISAILKELSKLDGVLDLSRPTVTGKTLGENIADAEVKDKAVIHSVEDPYSATGGLAVLFGNLAPQGCVVKTGAVDPKMMQHTGPARIYESQDEAISGILKGDVQAGEVVVIRYEGPKGGPGMPEMLAPTSTIMGQGLGDKVALITDGRFSGGTRGACIGHVSPEAAERGPIAALQNGDKITIDIPNKRIAVDLSDEEIEARLKALPPFEPKIKRGYLARYSQMVTSAGSGAVLKSFD.

Aspartate 80 is a Mg(2+) binding site. Cysteine 121 serves as a coordination point for [2Fe-2S] cluster. Residues aspartate 122 and lysine 123 each contribute to the Mg(2+) site. An N6-carboxylysine modification is found at lysine 123. Cysteine 194 is a [2Fe-2S] cluster binding site. Mg(2+) is bound at residue glutamate 447. The active-site Proton acceptor is the serine 473.

It belongs to the IlvD/Edd family. As to quaternary structure, homodimer. Requires [2Fe-2S] cluster as cofactor. Mg(2+) serves as cofactor.

It catalyses the reaction (2R)-2,3-dihydroxy-3-methylbutanoate = 3-methyl-2-oxobutanoate + H2O. The enzyme catalyses (2R,3R)-2,3-dihydroxy-3-methylpentanoate = (S)-3-methyl-2-oxopentanoate + H2O. Its pathway is amino-acid biosynthesis; L-isoleucine biosynthesis; L-isoleucine from 2-oxobutanoate: step 3/4. It participates in amino-acid biosynthesis; L-valine biosynthesis; L-valine from pyruvate: step 3/4. Its function is as follows. Functions in the biosynthesis of branched-chain amino acids. Catalyzes the dehydration of (2R,3R)-2,3-dihydroxy-3-methylpentanoate (2,3-dihydroxy-3-methylvalerate) into 2-oxo-3-methylpentanoate (2-oxo-3-methylvalerate) and of (2R)-2,3-dihydroxy-3-methylbutanoate (2,3-dihydroxyisovalerate) into 2-oxo-3-methylbutanoate (2-oxoisovalerate), the penultimate precursor to L-isoleucine and L-valine, respectively. The sequence is that of Dihydroxy-acid dehydratase from Chloroherpeton thalassium (strain ATCC 35110 / GB-78).